The primary structure comprises 639 residues: Probable potassium transport system protein Kup 1 (639 aa).

12 consecutive transmembrane segments (helical) span residues 27–47 (AILGSIGVVYGDIGTSPLYAF), 64–84 (VIGLTSLMIWSLTIIVTFKYI), 115–135 (VLIVLGLIGAALFLGDAMITP), 151–171 (PAMDDFIIPISVCILIGLFAI), 182–202 (FFGPITAVWFLVMGGAGLIHI), 225–245 (GFYGVVVLGAVFLTITGAEAL), 261–281 (WFCLVFPALTLNYLGQGALVL), 293–313 (LMFPQWAILPAVILATAATII), 351–371 (IYLPAVNTILLFGVVALVLTF), 377–397 (LATAYGISVTGAMVVTSLMFF), 408–428 (IWLALAVLTPLLLLELIFLGA), and 430–450 (LLKIHDGGYVPVLLAIAFTVI).

Belongs to the HAK/KUP transporter (TC 2.A.72) family.

Its subcellular location is the cell inner membrane. The catalysed reaction is K(+)(in) + H(+)(in) = K(+)(out) + H(+)(out). Functionally, transport of potassium into the cell. Likely operates as a K(+):H(+) symporter. This is Probable potassium transport system protein Kup 1 from Agrobacterium fabrum (strain C58 / ATCC 33970) (Agrobacterium tumefaciens (strain C58)).